The sequence spans 174 residues: Nascent polypeptide-associated complex subunit alpha (174 aa).

At Ser-2 the chain carries N-acetylserine. The 65-residue stretch at 14 to 78 (NKNEKKAREL…AKVDNFTQKL (65 aa)) folds into the NAC-A/B domain. Positions 85–137 (AQASGIMPSNEDVATKSPEDIQADMQAAAEGSVNAAAEEDDEEGEVDAGDLNK) are disordered. A Phosphoserine modification is found at Ser-93. Low complexity predominate over residues 111–120 (AAAEGSVNAA). The segment covering 121-132 (AEEDDEEGEVDA) has biased composition (acidic residues). The region spanning 135-174 (LNKDDIELVVQQTNVSKNQAIKALKAHNGDLVNAIMSLSK) is the UBA domain.

The protein belongs to the NAC-alpha family. In terms of assembly, part of the nascent polypeptide-associated complex (NAC), consisting of EGD2 and either EGD1 or BTT1. NAC associates with ribosomes via EGD1 or BTT1, and with the CCR4-NOT complex.

The protein localises to the cytoplasm. It localises to the nucleus. In terms of biological role, component of the nascent polypeptide-associated complex (NAC), a dynamic component of the ribosomal exit tunnel, protecting the emerging polypeptides from interaction with other cytoplasmic proteins to ensure appropriate nascent protein targeting. The NAC complex also promotes mitochondrial protein import by enhancing productive ribosome interactions with the outer mitochondrial membrane and blocks the inappropriate interaction of ribosomes translating non-secretory nascent polypeptides with translocation sites in the membrane of the endoplasmic reticulum. EGD2 may also be involved in transcription regulation. The chain is Nascent polypeptide-associated complex subunit alpha (EGD2) from Saccharomyces cerevisiae (strain YJM789) (Baker's yeast).